The chain runs to 932 residues: LPS-assembly protein LptD (932 aa).

Residues 1–33 (MALKSPAFRRKFPLLVTGGLLALQPLATSYAVA) form the signal peptide. The disordered stretch occupies residues 54 to 87 (PVNNLPPRPVHEGAAVSSGTEAASEGETADRPML).

This sequence belongs to the LptD family. Component of the lipopolysaccharide transport and assembly complex. Interacts with LptE and LptA.

It localises to the cell outer membrane. Functionally, together with LptE, is involved in the assembly of lipopolysaccharide (LPS) at the surface of the outer membrane. The sequence is that of LPS-assembly protein LptD from Pseudomonas putida (strain GB-1).